The sequence spans 887 residues: Autotaxin (887 aa).

The N-terminal stretch at 1–27 is a signal peptide; the sequence is MARQGCLGSFQVISLFTFAISVNICLG. Residues 28 to 35 constitute a propeptide, removed by furin; sequence FTASRIKR. The N-linked (GlcNAc...) asparagine glycan is linked to Asn-53. SMB domains follow at residues 54 to 97 and 98 to 142; these read TSGS…LKTA and RGWE…GESH. Disulfide bonds link Cys-58/Cys-75, Cys-62/Cys-93, Cys-73/Cys-86, Cys-79/Cys-85, Cys-102/Cys-119, Cys-107/Cys-137, Cys-117/Cys-130, Cys-123/Cys-129, Cys-148/Cys-194, and Cys-156/Cys-350. Residues 126 to 128 carry the Cell attachment site motif; sequence RGD. The phosphodiesterase stretch occupies residues 144-501; that stretch reads VDDDCEEIKV…PTFKYRTKVP (358 aa). Zn(2+) is bound by residues Asp-171 and Thr-209. The active-site Nucleophile is Thr-209. 3 residues coordinate 1-(9Z-octadecenoyl)-sn-glycero-3-phosphate: Thr-209, Asn-230, and Asp-311. Residues Thr-209, Asn-230, and Asp-311 each coordinate 1-hexadecanoyl-sn-glycero-3-phosphate. Residues Thr-209, Asn-230, and Asp-311 each contribute to the 1-tetradecanoyl-sn-glycerol 3-phosphate site. Residues Asp-311, His-315, Asp-358, and His-359 each coordinate Zn(2+). 5 cysteine pairs are disulfide-bonded: Cys-366–Cys-468, Cys-413–Cys-830, Cys-566–Cys-691, Cys-568–Cys-676, and Cys-799–Cys-809. 2 N-linked (GlcNAc...) asparagine glycosylation sites follow: Asn-398 and Asn-410. His-474 contacts Zn(2+). His-474 is a 1-(9Z-octadecenoyl)-sn-glycero-3-phosphate binding site. 1-hexadecanoyl-sn-glycero-3-phosphate is bound at residue His-474. A 1-tetradecanoyl-sn-glycerol 3-phosphate-binding site is contributed by His-474. Asn-524 carries N-linked (GlcNAc...) asparagine glycosylation. The span at 586 to 607 shows a compositional bias: basic and acidic residues; that stretch reads HTKGSTEAETGKFRGSKHENKK. The segment at 586–615 is disordered; that stretch reads HTKGSTEAETGKFRGSKHENKKNLNGSVEP. N-linked (GlcNAc...) asparagine glycosylation occurs at Asn-610. Residues 622 to 887 are nuclease-like domain; sequence LYGRPAVLYR…TYLHTYESEI (266 aa). Asp-764, Asn-766, Asp-768, Leu-770, and Asp-772 together coordinate Ca(2+). Asn-831 is a glycosylation site (N-linked (GlcNAc...) asparagine). Positions 854–875 are required for secretion; sequence IEHLTGLDFYRKTSRSYSEILT.

This sequence belongs to the nucleotide pyrophosphatase/phosphodiesterase family. The cofactor is Zn(2+). Ca(2+) is required as a cofactor. Post-translationally, N-glycosylation, but not furin-cleavage, plays a critical role on secretion and on lysoPLD activity. In terms of processing, the interdomain disulfide bond between Cys-413 and Cys-830 is essential for catalytic activity. In terms of tissue distribution, abundantly expressed in cerebrum and cerebellum. Localized in secretory epithelial cells in the brain and the eye including choroid plexus epithelial cells, ciliary epithelial cells, iris pigment epithelial cells, and retinal pigment cells.

Its subcellular location is the secreted. It catalyses the reaction a 1-O-alkyl-sn-glycero-3-phosphoethanolamine + H2O = a 1-O-alkyl-sn-glycero-3-phosphate + ethanolamine + H(+). The enzyme catalyses a 1-acyl-sn-glycero-3-phosphoethanolamine + H2O = a 1-acyl-sn-glycero-3-phosphate + ethanolamine + H(+). It carries out the reaction 1-(9Z-octadecenoyl)-sn-glycero-3-phosphoethanolamine + H2O = 1-(9Z-octadecenoyl)-sn-glycero-3-phosphate + ethanolamine + H(+). The catalysed reaction is a 1-O-alkyl-sn-glycero-3-phosphocholine + H2O = a 1-O-alkyl-sn-glycero-3-phosphate + choline + H(+). It catalyses the reaction 1-O-(9Z-octadecenyl)-sn-glycero-3-phosphocholine + H2O = 1-O-(9Z-octadecenyl)-sn-glycero-3-phosphate + choline + H(+). The enzyme catalyses 1-O-hexadecyl-sn-glycero-3-phosphocholine + H2O = 1-O-hexadecyl-sn-glycero-3-phosphate + choline + H(+). It carries out the reaction a 1-O-(1Z-alkenyl)-sn-glycero-3-phosphocholine + H2O = a 1-O-(1Z-alkenyl)-sn-glycero-3-phosphate + choline + H(+). The catalysed reaction is a 1-acyl-sn-glycero-3-phosphocholine + H2O = a 1-acyl-sn-glycero-3-phosphate + choline + H(+). It catalyses the reaction 1-dodecanoyl-sn-glycero-3-phosphocholine + H2O = 1-dodecanoyl-sn-glycerol 3-phosphate + choline + H(+). The enzyme catalyses 1-(9Z-octadecenoyl)-sn-glycero-3-phosphocholine + H2O = 1-(9Z-octadecenoyl)-sn-glycero-3-phosphate + choline + H(+). It carries out the reaction 1-tetradecanoyl-sn-glycero-3-phosphocholine + H2O = 1-tetradecanoyl-sn-glycerol 3-phosphate + choline + H(+). The catalysed reaction is 1-decanoyl-sn-glycero-3-phosphocholine + H2O = 1-decanoyl-sn-glycero-3-phosphate + choline + H(+). It catalyses the reaction 1-octadecanoyl-sn-glycero-3-phosphocholine + H2O = 1-octadecanoyl-sn-glycero-3-phosphate + choline + H(+). The enzyme catalyses 1-hexadecanoyl-sn-glycero-3-phosphocholine + H2O = 1-hexadecanoyl-sn-glycero-3-phosphate + choline + H(+). It carries out the reaction 1-hexanoyl-sn-glycero-3-phosphocholine + H2O = 1-hexanoyl-sn-glycero-3-phosphate + choline + H(+). The catalysed reaction is 1-(9Z,12Z)-octadecadienoyl-sn-glycero-3-phosphocholine + H2O = 1-(9Z,12Z)-octadecadienoyl-sn-glycero-3-phosphate + choline + H(+). It catalyses the reaction sphing-4-enine-phosphocholine + H2O = sphing-4-enine 1-phosphate + choline + H(+). The enzyme catalyses 1-(5Z,8Z,11Z,14Z-eicosatetraenoyl)-sn-glycero-3-phosphocholine + H2O = 1-(5Z,8Z,11Z,14Z-eicosatetraenoyl)-sn-glycero-3-phosphate + choline + H(+). It carries out the reaction a 2-acyl-sn-glycero-3-phosphocholine + H2O = a 2-acyl-sn-glycerol 3-phosphate + choline + H(+). The catalysed reaction is a 1,2-diacyl-sn-glycero-3-phosphocholine + H2O = a 1,2-diacyl-sn-glycero-3-phosphate + choline + H(+). It catalyses the reaction 1,2-dioctanoyl-sn-glycero-3-phosphocholine + H2O = 1,2-dioctanoyl-sn-glycero-3-phosphate + choline + H(+). The enzyme catalyses 1,2-didecanoyl-sn-glycero-3-phosphocholine + H2O = 1,2-didecanoyl-sn-glycero-3-phosphate + choline + H(+). It carries out the reaction a 1-acyl-sn-glycero-3-phospho-L-serine + H2O = a 1-acyl-sn-glycero-3-phosphate + L-serine + H(+). The catalysed reaction is 1-(9Z-octadecenoyl)-sn-glycero-3-phospho-L-serine + H2O = 1-(9Z-octadecenoyl)-sn-glycero-3-phosphate + L-serine + H(+). It catalyses the reaction a 2-acyl-sn-glycero-3-phospho-L-serine + H2O = a 2-acyl-sn-glycerol 3-phosphate + L-serine + H(+). With respect to regulation, inhibited by vanadate. Inhibited by micromolar levels of bile salts, such as tauroursodeoxycholate. Not inhibited by taurodeoxycholate. Not inhibited by hydroxysterols, such as 7-hydroxycholesterol, testosterone, dexamethasone and prednisolone. Inhibited by EDTA and EGTA. In terms of biological role, secreted lysophospholipase D that hydrolyzes lysophospholipids to produce the signaling molecule lysophosphatidic acid (LPA) in extracellular fluids. Its major substrate is lysophosphatidylcholine. Can also act on sphingosylphosphorylcholine producing sphingosine-1-phosphate, a modulator of cell motility. Can hydrolyze, in vitro, bis-pNPP, to some extent pNP-TMP, and barely ATP. Involved in several motility-related processes such as angiogenesis and neurite outgrowth. Acts as an angiogenic factor by stimulating migration of smooth muscle cells and microtubule formation. Stimulates migration of melanoma cells, probably via a pertussis toxin-sensitive G protein. May have a role in induction of parturition. Possible involvement in cell proliferation and adipose tissue development. Required for LPA production in activated platelets, cleaves the sn-1 lysophospholipids to generate sn-1 lysophosphatidic acids containing predominantly 18:2 and 20:4 fatty acids. Shows a preference for the sn-1 to the sn-2 isomer of 1-O-alkyl-sn-glycero-3-phosphocholine (lyso-PAF). The sequence is that of Autotaxin from Rattus norvegicus (Rat).